Here is a 196-residue protein sequence, read N- to C-terminus: ECF RNA polymerase sigma factor SigM (196 aa).

The tract at residues 39-105 (LFRRHHRQLH…ACLDRLRRAK (67 aa)) is sigma-70 factor domain-2. An Interaction with polymerase core subunit RpoC motif is present at residues 63-66 (DALQ). Residues 130-181 (AVQRALMRLPVEQRAAVVAVDMQGYSIADTARMLGVAEGTVKSRCARARARL) are sigma-70 factor domain-4. Residues 156-175 (IADTARMLGVAEGTVKSRCA) constitute a DNA-binding region (H-T-H motif).

Belongs to the sigma-70 factor family. ECF subfamily. In terms of assembly, interacts transiently with the RNA polymerase catalytic core formed by RpoA, RpoB, RpoC and RpoZ (2 alpha, 1 beta, 1 beta' and 1 omega subunit) to form the RNA polymerase holoenzyme that can initiate transcription. Interacts (via sigma-70 factor domain 4) with anti-sigma-M factor RsmA.

Functionally, sigma factors are initiation factors that promote the attachment of RNA polymerase to specific initiation sites and are then released. Extracytoplasmic function (ECF) sigma factors are held in an inactive form by an anti-sigma factor until released by regulated intramembrane proteolysis. This chain is ECF RNA polymerase sigma factor SigM (sigM), found in Mycobacterium tuberculosis (strain ATCC 35801 / TMC 107 / Erdman).